A 291-amino-acid polypeptide reads, in one-letter code: Foldase protein PrsA 2 (291 aa).

A signal peptide spans 1 to 20 (MKKKLILGLVMMMALFSLAA). A lipid anchor (N-palmitoyl cysteine) is attached at C21. C21 is lipidated: S-diacylglycerol cysteine. The PpiC domain occupies 135–226 (QPDITVSHIL…YGYHIIQMDK (92 aa)).

Belongs to the PrsA family.

Its subcellular location is the cell membrane. It carries out the reaction [protein]-peptidylproline (omega=180) = [protein]-peptidylproline (omega=0). In terms of biological role, plays a major role in protein secretion by helping the post-translocational extracellular folding of several secreted proteins. The protein is Foldase protein PrsA 2 (prsA2) of Listeria innocua serovar 6a (strain ATCC BAA-680 / CLIP 11262).